Reading from the N-terminus, the 574-residue chain is Probable E3 ubiquitin-protein ligase ipaH4.5 (574 aa).

An interaction with target proteins region spans residues 1-284 (MKPINNHSFF…YHGPQIYFSM (284 aa)). LRR repeat units lie at residues 63–82 (REPV…PLPL), 83–104 (HIRE…SPLL), 105–122 (TELH…TLPS), 123–143 (QLIK…SLPP), 144–165 (YLQS…PSTL), 166–183 (TILR…ELPH), 184–205 (RLQE…PQSL), 206–223 (KYLK…RLPQ), 224–246 (ELLA…ITLP), and 247–270 (ICTN…QRLT). The interval 285 to 292 (SDGQQNTL) is linker. Residues 293–574 (HRPLADAVTA…YRQLTDEVLA (282 aa)) are E3 ubiquitin-protein ligase catalytic domain. The 280-residue stretch at 295–574 (PLADAVTAWF…YRQLTDEVLA (280 aa)) folds into the NEL domain. Catalysis depends on Cys379, which acts as the Glycyl thioester intermediate.

This sequence belongs to the LRR-containing bacterial E3 ligase family. Post-translationally, ubiquitinated in the presence of host E1 ubiquitin-activating enzyme, E2 ubiquitin-conjugating enzyme and ubiquitin.

The protein resides in the secreted. Its subcellular location is the host cytoplasm. The enzyme catalyses S-ubiquitinyl-[E2 ubiquitin-conjugating enzyme]-L-cysteine + [acceptor protein]-L-lysine = [E2 ubiquitin-conjugating enzyme]-L-cysteine + N(6)-ubiquitinyl-[acceptor protein]-L-lysine.. Its function is as follows. Effector proteins function to alter host cell physiology and promote bacterial survival in host tissues. This protein is an E3 ubiquitin ligase that interferes with host's ubiquitination pathway. The protein is Probable E3 ubiquitin-protein ligase ipaH4.5 (ipaH4.5) of Shigella flexneri.